Consider the following 229-residue polypeptide: Large ribosomal subunit protein uL1 (229 aa).

The protein belongs to the universal ribosomal protein uL1 family. As to quaternary structure, part of the 50S ribosomal subunit.

Binds directly to 23S rRNA. The L1 stalk is quite mobile in the ribosome, and is involved in E site tRNA release. In terms of biological role, protein L1 is also a translational repressor protein, it controls the translation of the L11 operon by binding to its mRNA. The sequence is that of Large ribosomal subunit protein uL1 from Rhodopseudomonas palustris (strain HaA2).